A 318-amino-acid polypeptide reads, in one-letter code: Probable pyridoxal 5'-phosphate synthase subunit PDX1.1 (318 aa).

Residue D49 participates in D-ribose 5-phosphate binding. K106 (schiff-base intermediate with D-ribose 5-phosphate) is an active-site residue. Residue G178 participates in D-ribose 5-phosphate binding. R190 lines the D-glyceraldehyde 3-phosphate pocket. Residues G239 and G260 to S261 contribute to the D-ribose 5-phosphate site.

The protein belongs to the PdxS/SNZ family.

It catalyses the reaction aldehydo-D-ribose 5-phosphate + D-glyceraldehyde 3-phosphate + L-glutamine = pyridoxal 5'-phosphate + L-glutamate + phosphate + 3 H2O + H(+). It functions in the pathway cofactor biosynthesis; pyridoxal 5'-phosphate biosynthesis. Catalyzes the formation of pyridoxal 5'-phosphate from ribose 5-phosphate (RBP), glyceraldehyde 3-phosphate (G3P) and ammonia. The ammonia is provided by PDX2. Can also use ribulose 5-phosphate and dihydroxyacetone phosphate as substrates, resulting from enzyme-catalyzed isomerization of RBP and G3P, respectively. Also plays an indirect role in resistance to singlet oxygen-generating photosensitizers. The polypeptide is Probable pyridoxal 5'-phosphate synthase subunit PDX1.1 (PDX11) (Oryza sativa subsp. japonica (Rice)).